The sequence spans 669 residues: Matrix metalloproteinase-15 (669 aa).

Residues 1 to 41 constitute a signal peptide (or 45); the sequence is MGSDPSAPGRPGWTGSLLGDREEAARPRLLPLLLVLLGCLG. Positions 42–131 are excised as a propeptide; it reads LGVAAEDAEV…KANLRRRRKR (90 aa). The Cysteine switch motif lies at 109–116; it reads PRCGVPDQ. Cys-111 contacts Zn(2+). Residues 132–625 lie on the Extracellular side of the membrane; sequence YALTGRKWNN…QMEEVARTVN (494 aa). The N-linked (GlcNAc...) asparagine glycan is linked to Asn-150. His-259 is a binding site for Zn(2+). Residue Glu-260 is part of the active site. Zn(2+) is bound by residues His-263 and His-269. The disordered stretch occupies residues 300–370; the sequence is QQLYGTPDGQ…RPDQYGPNIC (71 aa). Over residues 305-322 the composition is skewed to low complexity; that stretch reads TPDGQPQPTQPLPTVTPR. Residues 333–342 are compositionally biased toward pro residues; it reads RPPQPPPPGG. 4 Hemopexin repeats span residues 367–415, 416–461, 463–511, and 512–559; these read PNIC…WRGL, PGDI…GLGI, YDRI…QGIP, and ASPK…FMGC. A disulfide bond links Cys-370 and Cys-559. The segment at 574–593 is disordered; it reads RPPFNPHGGAEPGADSAEGD. Ser-589 carries the post-translational modification Phosphoserine. Residues 626–646 traverse the membrane as a helical segment; that stretch reads VVMVLVPLLLLLCVLGLTYAL. Residues 647–669 lie on the Cytoplasmic side of the membrane; that stretch reads VQMQRKGAPRVLLYCKRSLQEWV.

The protein belongs to the peptidase M10A family. Zn(2+) is required as a cofactor. Requires Ca(2+) as cofactor. The precursor is cleaved by a furin endopeptidase. In terms of tissue distribution, appeared to be synthesized preferentially in liver, placenta, testis, colon and intestine. Substantial amounts are also detected in pancreas, kidney, lung, heart and skeletal muscle.

It is found in the membrane. Functionally, endopeptidase that degrades various components of the extracellular matrix. May activate progelatinase A. The chain is Matrix metalloproteinase-15 (MMP15) from Homo sapiens (Human).